The following is a 276-amino-acid chain: C-type lectin domain family 12 member B (276 aa).

The Cytoplasmic segment spans residues 1–43 (MSEDMTYATLTFQDSVAAGNNQDRNNLRKRGYPAPSSIWRQAA). The ITIM motif signature appears at 5-10 (MTYATL). Phosphotyrosine is present on Tyr-7. Residues 44 to 64 (LGLLTLCVMLLIGLVTLGIMF) traverse the membrane as a helical; Signal-anchor for type II membrane protein segment. Topologically, residues 65–276 (LQMSSEINSD…AALVKIEDLD (212 aa)) are extracellular. Asn-91, Asn-176, and Asn-237 each carry an N-linked (GlcNAc...) asparagine glycan. The 115-residue stretch at 150-264 (YQTSCYYFAV…CSAEISWICE (115 aa)) folds into the C-type lectin domain. Disulfide bonds link Cys-172–Cys-263 and Cys-242–Cys-255.

As to quaternary structure, homodimer. Interacts (via ITIM motif) with PTPN6. Interacts (via ITIM motif) with PTPN11; this interaction triggers dephosphorylation and activation of PTPN11.

It localises to the cell membrane. Inhibitory receptor postulated to negatively regulate immune and non-immune functions. Upon phosphorylation, recruits SH2 domain-containing PTPN6 and PTPN11 phosphatases to its ITIM motif and antagonizes activation signals. Although it inhibits KLRK1/NKG2D-mediated signaling, it does not bind known ligands of KLRK1/NKG2D and therefore is not its inhibitory counterpart. May limit activation of myeloid cell subsets in response to infection or tissue inflammation. May protect target cells against natural killer cell-mediated lysis. May negatively regulate cell cycle and differentiation of melanocytes via inactivation of STAT3. The polypeptide is C-type lectin domain family 12 member B (CLEC12B) (Bos taurus (Bovine)).